The following is a 238-amino-acid chain: 2-C-methyl-D-erythritol 4-phosphate cytidylyltransferase (238 aa).

This sequence belongs to the IspD/TarI cytidylyltransferase family. IspD subfamily.

The enzyme catalyses 2-C-methyl-D-erythritol 4-phosphate + CTP + H(+) = 4-CDP-2-C-methyl-D-erythritol + diphosphate. It participates in isoprenoid biosynthesis; isopentenyl diphosphate biosynthesis via DXP pathway; isopentenyl diphosphate from 1-deoxy-D-xylulose 5-phosphate: step 2/6. Functionally, catalyzes the formation of 4-diphosphocytidyl-2-C-methyl-D-erythritol from CTP and 2-C-methyl-D-erythritol 4-phosphate (MEP). The protein is 2-C-methyl-D-erythritol 4-phosphate cytidylyltransferase of Acinetobacter baumannii (strain ACICU).